The following is a 435-amino-acid chain: MDFEYIYPIIVLFGSFAIILAVGVPITFAIGLSSLFSILIALPPDAAISVISQKMTVGLDGFTLLAIPFFVLAGNIMNTGGIARRLVNLAQALVGRLPGSLAHCNILANTLFGAISGSAVASAAAVGGIMSPLQEKEGYSPAFSTAINVASAPIGLMIPPSNVLIVYSLASGGTSVAALFLAGYLPGILTALALMTVAALYAHRHHYPVAERINLRQFLSVFRDSLPSLLLIFIIIGGIIGGVFTPTEASAIAVIYSLALAAIYREINVSKLRDILLDSVVTSSIVLLLVGCSMGMSWAMTNADVPELINEMITSVSENKWVILLIINLILLFVGTFMDITPAILIFTPIFLPIAQHLGIDPVHFGIIMVFNLTIGLCTPPVGTILFVGCSIGKISIDKVVKPLLPMFLALFVVMAMICYFPQLSLLLPTLFAPS.

11 consecutive transmembrane segments (helical) span residues 9-29 (IIVL…ITFA), 57-77 (VGLD…GNIM), 110-130 (TLFG…GGIM), 146-166 (AINV…VLIV), 176-196 (VAAL…ALMT), 226-246 (LPSL…VFTP), 280-300 (VVTS…SWAM), 321-341 (WVIL…MDIT), 343-363 (AILI…IDPV), 367-387 (IIMV…TILF), and 408-428 (FLAL…SLLL).

Belongs to the YiaN/YgiK family.

The protein localises to the cell inner membrane. This is an uncharacterized protein from Salmonella typhimurium (strain LT2 / SGSC1412 / ATCC 700720).